We begin with the raw amino-acid sequence, 342 residues long: Hydrogenase expression/formation protein HupV (342 aa).

This sequence belongs to the HupK family.

This chain is Hydrogenase expression/formation protein HupV (hupV), found in Azotobacter chroococcum mcd 1.